Reading from the N-terminus, the 500-residue chain is MSLATTNSVAEIRARNKELIEEVLKVYPEKTAKRRAKHLNVHQAGKSDCGVKSNIKSIPGVMTIRGCAYAGSKGVVWGPIKDMVHISHGPVGCGQYSWGSRRNYYVGTTGIDSFVTLQFTSDFQEKDIVFGGDKKLDKILDEIQELFPLNNGITIQSECPVGLIGDDIEAVSRAKSKEYGGKTIVPVRCEGFRGVSQSLGHHIANDAVRDWIFGHIEAEGKPKFEPTPYDVAIIGDYNIGGDAWSSRILLEEMGLRVIAQWSGDGSLAELEATPKAKLNILHCYRSMNYISRHMEEKFGIPWCEYNFFGPSKIADSLRRIAGYFDDKIKEGAERVIEKYQPLVDAVIAKYRPRLEGKTVMLYVGGLRPRHVIGAYEDLGMDVIGTGYEFGHNDDYQRTAQHYVKDSTLIYDDVNGYEFERFVEKLQPDLVGSGIKEKYVFQKMSVPFRQMHSWDYSGPYHGYDGFAIFARDMDMAVNSPIWKRTKAPWKEAPSAKLQAAE.

Positions 67, 93, and 159 each coordinate [8Fe-7S] cluster. [7Fe-Mo-9S-C-homocitryl] cluster-binding residues include Cys-283 and His-451.

Belongs to the NifD/NifK/NifE/NifN family. Tetramer of two alpha and two beta chains. Forms complex with the iron protein (nitrogenase component 2). It depends on [8Fe-7S] cluster as a cofactor. Requires [7Fe-Mo-9S-C-homocitryl] cluster as cofactor.

It carries out the reaction N2 + 8 reduced [2Fe-2S]-[ferredoxin] + 16 ATP + 16 H2O = H2 + 8 oxidized [2Fe-2S]-[ferredoxin] + 2 NH4(+) + 16 ADP + 16 phosphate + 6 H(+). Functionally, this molybdenum-iron protein is part of the nitrogenase complex that catalyzes the key enzymatic reactions in nitrogen fixation. This chain is Nitrogenase molybdenum-iron protein alpha chain (nifD), found in Bradyrhizobium diazoefficiens (strain JCM 10833 / BCRC 13528 / IAM 13628 / NBRC 14792 / USDA 110).